Here is a 96-residue protein sequence, read N- to C-terminus: Co-chaperonin GroES (96 aa).

The protein belongs to the GroES chaperonin family. In terms of assembly, heptamer of 7 subunits arranged in a ring. Interacts with the chaperonin GroEL.

It is found in the cytoplasm. Its function is as follows. Together with the chaperonin GroEL, plays an essential role in assisting protein folding. The GroEL-GroES system forms a nano-cage that allows encapsulation of the non-native substrate proteins and provides a physical environment optimized to promote and accelerate protein folding. GroES binds to the apical surface of the GroEL ring, thereby capping the opening of the GroEL channel. The polypeptide is Co-chaperonin GroES (Shewanella sediminis (strain HAW-EB3)).